A 500-amino-acid polypeptide reads, in one-letter code: MANKKIRVRYAPSPTGHLHIGNARTALFNYLFARHNKGTLVLRIEDTDTARNVEGGAESQIENLHWLGIDWDEGPDIGGDYGPYKQSERKDIYQKYIDQLLEEGKAYYSFKTEEELEAQREEQRAMGIAPHYVYEYEGMTTDEIKQAQDEARAKGLKPVVRIHIPEGVTYEWDDIVKGHLSFESDTIGGDFVIQKRDGMPTYNFAVVIDDHLMEISHVLRGDDHISNTPKQLCVYEALGWEAPVFGHMTLIINSATGKKLSKRDESVLQFIEQYRELGFLPEAMFNFITLLGWSPVGESEIFSKREFIKQFDPARLSKSPAAFDQKKLDWVNNQYMKTADRDELLDLALHNLQEAGLVEANPAPGKMEWVRQLVNMYANQMSYTKQIVDLSKIFFTEAKYLTDEEVEEIKKDEARPAIEEFKKQLDKLDNFTAKKIMGAIMATRRETGIKGRKLFMPIRIATTRSMVGPGIGEAMELMGKDTVMKHLDLTLKQLSEAGIE.

The 'HIGH' region signature appears at 12–22; it reads PSPTGHLHIGN. The 'KMSKS' region signature appears at 259 to 263; it reads KLSKR. K262 provides a ligand contact to ATP.

It belongs to the class-I aminoacyl-tRNA synthetase family. Glutamate--tRNA ligase type 1 subfamily. In terms of assembly, monomer.

The protein localises to the cytoplasm. It catalyses the reaction tRNA(Glu) + L-glutamate + ATP = L-glutamyl-tRNA(Glu) + AMP + diphosphate. Functionally, catalyzes the attachment of glutamate to tRNA(Glu) in a two-step reaction: glutamate is first activated by ATP to form Glu-AMP and then transferred to the acceptor end of tRNA(Glu). In Lactobacillus delbrueckii subsp. bulgaricus (strain ATCC 11842 / DSM 20081 / BCRC 10696 / JCM 1002 / NBRC 13953 / NCIMB 11778 / NCTC 12712 / WDCM 00102 / Lb 14), this protein is Glutamate--tRNA ligase.